The primary structure comprises 545 residues: CTP synthase (545 aa).

The tract at residues 1–266 (MTTNYIFVTG…DDYICKRFSL (266 aa)) is amidoligase domain. Ser14 lines the CTP pocket. Ser14 contributes to the UTP binding site. Residues 15–20 (SLGKGI) and Asp72 contribute to the ATP site. Asp72 and Glu140 together coordinate Mg(2+). CTP-binding positions include 147–149 (DIE), 187–192 (KTKPTQ), and Lys223. Residues 187–192 (KTKPTQ) and Lys223 contribute to the UTP site. 239–241 (KDV) provides a ligand contact to ATP. Residues 291-542 (TIGMVGKYIE…VKAANEHQKR (252 aa)) form the Glutamine amidotransferase type-1 domain. An L-glutamine-binding site is contributed by Gly352. Cys379 (nucleophile; for glutamine hydrolysis) is an active-site residue. Residues 380-383 (LGMQ), Glu403, and Arg470 contribute to the L-glutamine site. Residues His515 and Glu517 contribute to the active site.

It belongs to the CTP synthase family. Homotetramer.

It catalyses the reaction UTP + L-glutamine + ATP + H2O = CTP + L-glutamate + ADP + phosphate + 2 H(+). The enzyme catalyses L-glutamine + H2O = L-glutamate + NH4(+). It carries out the reaction UTP + NH4(+) + ATP = CTP + ADP + phosphate + 2 H(+). The protein operates within pyrimidine metabolism; CTP biosynthesis via de novo pathway; CTP from UDP: step 2/2. Its activity is regulated as follows. Allosterically activated by GTP, when glutamine is the substrate; GTP has no effect on the reaction when ammonia is the substrate. The allosteric effector GTP functions by stabilizing the protein conformation that binds the tetrahedral intermediate(s) formed during glutamine hydrolysis. Inhibited by the product CTP, via allosteric rather than competitive inhibition. Catalyzes the ATP-dependent amination of UTP to CTP with either L-glutamine or ammonia as the source of nitrogen. Regulates intracellular CTP levels through interactions with the four ribonucleotide triphosphates. This is CTP synthase from Salmonella paratyphi A (strain ATCC 9150 / SARB42).